Here is a 235-residue protein sequence, read N- to C-terminus: Protein LIFEGUARD 1 (235 aa).

The next 7 membrane-spanning stretches (helical) occupy residues 33-53 (YSIL…VYFV), 67-87 (LAVF…LLAF), 95-115 (CIVL…CCSL), 120-140 (IVLE…IYTF), 149-169 (FSFL…FTLL), 178-198 (LSSM…IIFD), and 212-232 (ITAA…LLGI).

It belongs to the BI1 family. In terms of tissue distribution, expressed at very low in leaves.

The protein localises to the membrane. (Microbial infection) Facilitates the development of the powdery mildew fungus E.cruciferarum. In terms of biological role, (Microbial infection) May prevent cell death upon A.alternata f.sp. lycopersici (AAL) toxin treatment. The polypeptide is Protein LIFEGUARD 1 (Arabidopsis thaliana (Mouse-ear cress)).